The sequence spans 510 residues: Ribonuclease Y (510 aa).

A helical membrane pass occupies residues M1–V21. Residues T200 to I260 enclose the KH domain. An HD domain is found at V326 to A419.

It belongs to the RNase Y family.

It is found in the cell membrane. Functionally, endoribonuclease that initiates mRNA decay. In Thermosipho melanesiensis (strain DSM 12029 / CIP 104789 / BI429), this protein is Ribonuclease Y.